A 336-amino-acid chain; its full sequence is DNA-directed RNA polymerase subunit alpha (336 aa).

Residues 1-232 are alpha N-terminal domain (alpha-NTD); it reads MIQKNWQELI…DQLSVFVNFD (232 aa). The interval 248-336 is alpha C-terminal domain (alpha-CTD); that stretch reads FNPALLKKVD…DLAKRYEDQY (89 aa).

Belongs to the RNA polymerase alpha chain family. Homodimer. The RNAP catalytic core consists of 2 alpha, 1 beta, 1 beta' and 1 omega subunit. When a sigma factor is associated with the core the holoenzyme is formed, which can initiate transcription.

The catalysed reaction is RNA(n) + a ribonucleoside 5'-triphosphate = RNA(n+1) + diphosphate. Its function is as follows. DNA-dependent RNA polymerase catalyzes the transcription of DNA into RNA using the four ribonucleoside triphosphates as substrates. The chain is DNA-directed RNA polymerase subunit alpha from Sinorhizobium medicae (strain WSM419) (Ensifer medicae).